The sequence spans 435 residues: Beta-arrestin arr-1 (435 aa).

The disordered stretch occupies residues leucine 358–glycine 382. The segment covering lysine 362 to arginine 372 has biased composition (basic and acidic residues). Residues leucine 390–histidine 394 carry the Clathrin box motif. The [DE]-X(1,2)-F-X-X-[FL]-X-X-X-R motif motif lies at aspartate 404–arginine 414. Residues histidine 416–leucine 435 are disordered. A compositionally biased stretch (low complexity) spans proline 424–leucine 435.

It belongs to the arrestin family. In terms of assembly, component of a complex composed of arr-1, daf-18 and mpz-1. Within the complex, interacts (via C-terminus) with mpz-1 (via PDZ domain) and phosphatase daf-18. May interact (via C-terminus) with clathrin chc-1 and beta-2 adaptin (AP2) apb-1. As to expression, expressed in head neurons, nerve ring and ventral nerve cord (at protein level). Expressed in the nervous system including the nerve ring and the ventral and dorsal nerve cords. Highly expressed in amphid chemosensory neurons AWA, AWB, AWC, ADL and ASH, and in hermaphrodite specific neuron HSN. Also expressed in the intestine.

The protein resides in the perikaryon. Its subcellular location is the cell projection. It is found in the dendrite. Its function is as follows. Adapter protein required for olfactory adaptation and recovery to volatile odorants, probably by desensitization of G-protein coupled receptors (GPCR). May play a role in clathrin-mediated GPCR endocytosis. Acts as a positive regulator of insulin-like daf-2 signaling pathway probably by forming a complex with mpz-1 and phosphatase daf-18 likely resulting in daf-18 inhibition. Involved in egg-laying. The sequence is that of Beta-arrestin arr-1 from Caenorhabditis elegans.